Consider the following 2367-residue polypeptide: Toxin B (2367 aa).

The segment at 2-91 (SLVNRKQLEK…EILELKNSNL (90 aa)) is four-helical bundle. The GT44 domain maps to 96–469 (KNLHFIWIGG…YPEANTTITL (374 aa)). The tract at residues 96 to 469 (KNLHFIWIGG…YPEANTTITL (374 aa)) is glucosyltransferase region. UDP-alpha-D-glucose contacts are provided by residues 101–103 (IWI), Asn139, 269–273 (SDILR), and 286–288 (DVD). Asp286, Asp288, and Glu516 together coordinate Mg(2+). 519–521 (SLW) lines the UDP-alpha-D-glucose pocket. The autoprocessing region stretch occupies residues 545 to 800 (GEDDNLDFSQ…KSKNLPELST (256 aa)). Glu546 and Asp547 together coordinate Zn(2+). The 208-residue stretch at 568–775 (SSSTKSSERG…EESIIKDISS (208 aa)) folds into the Peptidase C80 domain. 3 residues coordinate 1D-myo-inositol hexakisphosphate: Tyr578, Lys601, and Lys648. His654 contributes to the Zn(2+) binding site. His654 (for protease activity) is an active-site residue. The active-site Nucleophile; for protease activity is the Cys699. Residue His758 coordinates Zn(2+). 1D-myo-inositol hexakisphosphate contacts are provided by Lys765, Lys776, and Lys793. Residues 801–1501 (LLQEIRNNSN…VVLIIKVYMD (701 aa)) are translocation region. 3 interaction with host frizzled receptors FZD1, FZD2 and FZD7 regions span residues 1434–1439 (LKTLMA), 1487–1512 (SELSDVVLIIKVYMDNSKPPFGYYSN), and 1598–1600 (SLK). Cell wall-binding repeat units follow at residues 1833–1852 (VSGLVYINDSLYYFKPPIKN), 1854–1873 (ITGFTTIGDDKYYFNPDNGG), 1876–1895 (SVGETIIDGKNYYFSQNGVL), 1926–1945 (FTGKLIIDENVYYFGDNYRA), 1946–1965 (AIEWQTLDDEVYYFSTDTGR), 1967–1986 (FKGLNQIGDDKFYFNSDGIM), 1987–2006 (QKGFVNINDKTFYFDDSGVM), 2007–2026 (KSGYTEIDGRYFYFAENGEM), 2057–2076 (YSGILNFNNKIYYFDDSFTA), 2077–2097 (VVGWKDLEDGSKYYFDENTAE), 2099–2118 (SIGISIINDGKYYFNDSGIM), 2119–2138 (QIGFVTINNEVFYFSDSGIV), 2139–2158 (ESGMQNIDDNYFYISENGLV), 2209–2231 (ETGWIYDSENESDKYYFDPEAKK), 2233–2252 (YKGINVIDDIKYYFDENGIM), 2253–2272 (RTGLITFEDNHYYFNEDGEM), 2273–2292 (QYGYLNIEDKMFYFSEDGIM), 2323–2342 (YTGWLDLDEKRYYFTDEYIA), and 2343–2362 (ATGSVIIDGEEYYFDPDTAQ). A receptor-binding (CROPS) region region spans residues 1835-2367 (GLVYINDSLY…PDTAQLVISE (533 aa)).

It belongs to the clostridial glucosylating toxin (LCGT) family. As to quaternary structure, interacts with host FZD1. Interacts with host FZD2; interaction promotes toxin entry into host cell and occupies the binding site for Wnt-adducted palmitoleate in FZD2, leading to prevent Wnt-binding and downstream Wnt signaling. Interacts with host FZD7. Interacts with host CSPG4. Interacts with host NECTIN3/PVRL3. The cofactor is Zn(2+). Mn(2+) is required as a cofactor. Requires Mg(2+) as cofactor. In terms of processing, undergoes autocatalytic cleavage to release the N-terminal part (Glucosyltransferase TcdB), which constitutes the active part of the toxin, in the host cytosol. 1D-myo-inositol hexakisphosphate-binding (InsP6) activates the peptidase C80 domain and promotes autoprocessing.

It is found in the secreted. The protein localises to the host endosome membrane. Its subcellular location is the host cytoplasm. The protein resides in the host cytosol. It localises to the host cell membrane. The catalysed reaction is L-threonyl-[protein] + UDP-alpha-D-glucose = 3-O-(alpha-D-glucosyl)-L-threonyl-[protein] + UDP + H(+). Protease activity is activated upon binding to 1D-myo-inositol hexakisphosphate (InsP6), which induces conformational reorganization. Precursor of a cytotoxin that targets and disrupts the colonic epithelium, inducing the host inflammatory and innate immune responses and resulting in diarrhea and pseudomembranous colitis. TcdB constitutes the main toxin that mediates the pathology of C.difficile infection, an opportunistic pathogen that colonizes the colon when the normal gut microbiome is disrupted. Compared to TcdA, TcdB is more virulent and more important for inducing the host inflammatory and innate immune responses. This form constitutes the precursor of the toxin: it enters into host cells and mediates autoprocessing to release the active toxin (Glucosyltransferase TcdB) into the host cytosol. Targets colonic epithelia by binding to the frizzled receptors FZD1, FZD2 and FZD7, and enters host cells via clathrin-mediated endocytosis. Frizzled receptors constitute the major host receptors in the colonic epithelium, but other receptors, such as CSPG4 or NECTIN3/PVRL3, have been identified. Binding to carbohydrates and sulfated glycosaminoglycans on host cell surface also contribute to entry into cells. Once entered into host cells, acidification in the endosome promotes the membrane insertion of the translocation region and formation of a pore, leading to translocation of the GT44 and peptidase C80 domains across the endosomal membrane. This activates the peptidase C80 domain and autocatalytic processing, releasing the N-terminal part (Glucosyltransferase TcdB), which constitutes the active part of the toxin, in the cytosol. In terms of biological role, active form of the toxin, which is released into the host cytosol following autoprocessing and inactivates small GTPases. Acts by mediating monoglucosylation of small GTPases of the Rho family (Rac1, RhoA, RhoB, RhoC, RhoG and Cdc42) in host cells at the conserved threonine residue located in the switch I region ('Thr-37/35'), using UDP-alpha-D-glucose as the sugar donor. Monoglucosylation of host small GTPases completely prevents the recognition of the downstream effector, blocking the GTPases in their inactive form, leading to actin cytoskeleton disruption and cell death, resulting in the loss of colonic epithelial barrier function. In Clostridioides difficile (Peptoclostridium difficile), this protein is Toxin B.